We begin with the raw amino-acid sequence, 255 residues long: Ribonuclease HII (255 aa).

The region spanning 72 to 255 (NYIAGVDEAG…RLSFVKNFVE (184 aa)) is the RNase H type-2 domain. The a divalent metal cation site is built by Asp-78, Glu-79, and Asp-170.

Belongs to the RNase HII family. The cofactor is Mn(2+). It depends on Mg(2+) as a cofactor.

Its subcellular location is the cytoplasm. It catalyses the reaction Endonucleolytic cleavage to 5'-phosphomonoester.. In terms of biological role, endonuclease that specifically degrades the RNA of RNA-DNA hybrids. This is Ribonuclease HII from Ruminiclostridium cellulolyticum (strain ATCC 35319 / DSM 5812 / JCM 6584 / H10) (Clostridium cellulolyticum).